Reading from the N-terminus, the 295-residue chain is N-acetylmuramic acid 6-phosphate etherase (295 aa).

An SIS domain is found at 53 to 216 (TTEQFKQGGR…STITMVGVGK (164 aa)). The Proton donor role is filled by Glu-81. Residue Glu-112 is part of the active site.

The protein belongs to the GCKR-like family. MurNAc-6-P etherase subfamily. Homodimer.

It carries out the reaction N-acetyl-D-muramate 6-phosphate + H2O = N-acetyl-D-glucosamine 6-phosphate + (R)-lactate. The protein operates within amino-sugar metabolism; N-acetylmuramate degradation. Functionally, specifically catalyzes the cleavage of the D-lactyl ether substituent of MurNAc 6-phosphate, producing GlcNAc 6-phosphate and D-lactate. The polypeptide is N-acetylmuramic acid 6-phosphate etherase (Staphylococcus saprophyticus subsp. saprophyticus (strain ATCC 15305 / DSM 20229 / NCIMB 8711 / NCTC 7292 / S-41)).